We begin with the raw amino-acid sequence, 123 residues long: MIRGIGTDIVEIERIKKAIKSNPNFINRFFTQKEIEYFKLRKFNANTISGNFAAKEAVSKALGSGFRGFGLKDIEVLRDELGKPIVNLSDKLYKMFNLDNYNIFISISHSNTDAIAYAIIEVI.

Mg(2+) contacts are provided by D8 and E56.

It belongs to the P-Pant transferase superfamily. AcpS family. Requires Mg(2+) as cofactor.

It is found in the cytoplasm. It catalyses the reaction apo-[ACP] + CoA = holo-[ACP] + adenosine 3',5'-bisphosphate + H(+). Functionally, transfers the 4'-phosphopantetheine moiety from coenzyme A to a Ser of acyl-carrier-protein. The polypeptide is Holo-[acyl-carrier-protein] synthase (Clostridium botulinum (strain Eklund 17B / Type B)).